Here is a 302-residue protein sequence, read N- to C-terminus: Large ribosomal subunit protein uL18 (302 aa).

This sequence belongs to the universal ribosomal protein uL18 family. As to quaternary structure, component of the large ribosomal subunit (LSU).

The protein resides in the cytoplasm. The protein localises to the nucleus. In terms of biological role, component of the ribosome, a large ribonucleoprotein complex responsible for the synthesis of proteins in the cell. The small ribosomal subunit (SSU) binds messenger RNAs (mRNAs) and translates the encoded message by selecting cognate aminoacyl-transfer RNA (tRNA) molecules. The large subunit (LSU) contains the ribosomal catalytic site termed the peptidyl transferase center (PTC), which catalyzes the formation of peptide bonds, thereby polymerizing the amino acids delivered by tRNAs into a polypeptide chain. The nascent polypeptides leave the ribosome through a tunnel in the LSU and interact with protein factors that function in enzymatic processing, targeting, and the membrane insertion of nascent chains at the exit of the ribosomal tunnel. This chain is Large ribosomal subunit protein uL18 (RPL5), found in Cucumis sativus (Cucumber).